The sequence spans 253 residues: 1-(5-phosphoribosyl)-5-[(5-phosphoribosylamino)methylideneamino] imidazole-4-carboxamide isomerase (253 aa).

Asp8 acts as the Proton acceptor in catalysis. Catalysis depends on Asp131, which acts as the Proton donor.

It belongs to the HisA/HisF family.

The protein localises to the cytoplasm. The enzyme catalyses 1-(5-phospho-beta-D-ribosyl)-5-[(5-phospho-beta-D-ribosylamino)methylideneamino]imidazole-4-carboxamide = 5-[(5-phospho-1-deoxy-D-ribulos-1-ylimino)methylamino]-1-(5-phospho-beta-D-ribosyl)imidazole-4-carboxamide. It functions in the pathway amino-acid biosynthesis; L-histidine biosynthesis; L-histidine from 5-phospho-alpha-D-ribose 1-diphosphate: step 4/9. In Polynucleobacter necessarius subsp. necessarius (strain STIR1), this protein is 1-(5-phosphoribosyl)-5-[(5-phosphoribosylamino)methylideneamino] imidazole-4-carboxamide isomerase.